Consider the following 209-residue polypeptide: MKASEWIDISQPLNNEIATWPGDTPFSYEVSCTKEQSGSVNIGKVTMSIHTGTHIDAPFHFDNDGKKVIDLDIHVYVGPARIIDVSSMDSIGVKELQQFNLEGVERLLLRTSSHGNAQKFPDIIPFLCAEIAPFLSKKGVRLIGVDVPSVDPLDDKELAAHHQLFQHGIHILENVVLDHVQDGDYELIALPLALTEADGSPVRAIIRPL.

Trp-20 serves as a coordination point for substrate. 3 residues coordinate Zn(2+): His-50, His-54, and Asp-56. His-60 functions as the Proton donor/acceptor in the catalytic mechanism. Positions 161 and 173 each coordinate Zn(2+).

This sequence belongs to the Cyclase 1 superfamily. KynB family. Homodimer. The cofactor is Zn(2+).

The enzyme catalyses N-formyl-L-kynurenine + H2O = L-kynurenine + formate + H(+). The protein operates within amino-acid degradation; L-tryptophan degradation via kynurenine pathway; L-kynurenine from L-tryptophan: step 2/2. Its function is as follows. Catalyzes the hydrolysis of N-formyl-L-kynurenine to L-kynurenine, the second step in the kynurenine pathway of tryptophan degradation. This is Kynurenine formamidase from Bacillus cytotoxicus (strain DSM 22905 / CIP 110041 / 391-98 / NVH 391-98).